Consider the following 445-residue polypeptide: Glutamate-1-semialdehyde 2,1-aminomutase (445 aa).

Lys-281 is subject to N6-(pyridoxal phosphate)lysine.

Belongs to the class-III pyridoxal-phosphate-dependent aminotransferase family. HemL subfamily. Homodimer. Pyridoxal 5'-phosphate serves as cofactor.

Its subcellular location is the cytoplasm. The catalysed reaction is (S)-4-amino-5-oxopentanoate = 5-aminolevulinate. Its pathway is porphyrin-containing compound metabolism; protoporphyrin-IX biosynthesis; 5-aminolevulinate from L-glutamyl-tRNA(Glu): step 2/2. This Nocardioides sp. (strain ATCC BAA-499 / JS614) protein is Glutamate-1-semialdehyde 2,1-aminomutase.